The chain runs to 991 residues: Toll-like receptor 13 (991 aa).

Positions 1–68 (MSGLYRILVQ…GFSLPPVAET (68 aa)) are cleaved as a signal peptide. Residues 69-783 (YGFNKCTQYE…DAMCNFDLGK (715 aa)) are Extracellular-facing. Residues asparagine 93, asparagine 109, and asparagine 125 are each glycosylated (N-linked (GlcNAc...) asparagine). 25 LRR repeats span residues 104–125 (YTTHLNLTHNEIQVLPPWSFTN), 128–149 (ALVDLRLEWNSIWKIDEGAFRG), 152–174 (NLTLLNLVENKIQSVNNSFEGLS), 175–196 (SLKTLLLSHNQITHIHKDAFTP), 199–220 (KLKYLSLSRNNISDFSGILEAV), 225–246 (CLERLDLTNNSIMYLDHSPRSL), 248–268 (SLTHLSFEGNKLRELNFSALS), 271–292 (NLTNLSASRNGNKVIQNVYLKT), 295–315 (QLKSLNLSGTVIKLENLSAKH), 318–338 (NLRAMDLSNWELRHGHLDMKT), 348–368 (KLETLVFQKNVTNAEGIKQLA), 372–394 (RLLFLDLGQNSDLIYLNDSEFNA), 397–418 (SLQKLNLNKCQLSFINNRTWSS), 421–442 (NLTSLDLSHNKFKSFPDFAFSP), 445–466 (HLEFLSLSRNPITELNNLAFSG), 469–490 (ALKELNLAACWIVTIDRYSFTQ), 493–514 (NLEVLDLGDNNIRTLNHGTFRP), 517–538 (KLQSLILSHNCLKILEPNSFSG), 541–562 (NLRSLDLMYNSLSYFHEHLFSG), 565–585 (KLLILKLGFNKITYETTRTLQ), 594–617 (SLKQLNLEGQRHGIQVVPSNFFQG), 620–641 (SLQELLLGKNPSVFLDHHQFDP), 644–665 (NLTKLDISGTKDGDRSLYLNAS), 672–693 (RLKILRLENNNLESLVPDMFSS), and 696–716 (SLQVFSLRFNNLKVINQSHLK). N-linked (GlcNAc...) asparagine glycans are attached at residues asparagine 152 and asparagine 167. 7 N-linked (GlcNAc...) asparagine glycosylation sites follow: asparagine 209, asparagine 233, asparagine 263, asparagine 271, asparagine 274, asparagine 300, and asparagine 310. N-linked (GlcNAc...) asparagine glycans are attached at residues asparagine 357, asparagine 388, asparagine 413, and asparagine 421. N-linked (GlcNAc...) asparagine glycosylation is found at asparagine 644 and asparagine 663. N-linked (GlcNAc...) asparagine glycosylation is found at asparagine 711 and asparagine 742. The 51-residue stretch at 729–779 (NKLQCTCDNLWFKNWSMNTEEVHIPFLRSYPCQQPGSQSLLIDFDDAMCNF) folds into the LRRCT domain. A helical membrane pass occupies residues 784 to 804 (VYFLCSFSMVLSTMVFSWFST). Over 805–991 (KMIASLWYGL…KENTHLIVVE (187 aa)) the chain is Cytoplasmic. Positions 832–975 (FLYDAFVSFS…LFWARIRNAL (144 aa)) constitute a TIR domain.

The protein belongs to the Toll-like receptor family. In terms of assembly, binds MYD88 via their respective TIR domains. Interacts with UNC93B1.

It is found in the endosome membrane. In terms of biological role, component of innate and adaptive immunity that recognizes and binds 23S rRNA from bacteria. TLRs (Toll-like receptors) control host immune response against pathogens through recognition of molecular patterns specific to microorganisms. Acts via MYD88 and TRAF6, leading to NF-kappa-B activation, cytokine secretion and the inflammatory response. Specifically binds the 5'-CGGAAAGACC-3' sequence on bacterial 23S rRNA, a sequence also bound by MLS group antibiotics (including erythromycin). May also recognize vesicular stomatitis virus; however, these data require additional evidences. The polypeptide is Toll-like receptor 13 (Tlr13) (Mus musculus (Mouse)).